The sequence spans 302 residues: Sulfate adenylyltransferase subunit 2 (302 aa).

The protein belongs to the PAPS reductase family. CysD subfamily. In terms of assembly, heterodimer composed of CysD, the smaller subunit, and CysN.

It carries out the reaction sulfate + ATP + H(+) = adenosine 5'-phosphosulfate + diphosphate. The protein operates within sulfur metabolism; hydrogen sulfide biosynthesis; sulfite from sulfate: step 1/3. Its function is as follows. With CysN forms the ATP sulfurylase (ATPS) that catalyzes the adenylation of sulfate producing adenosine 5'-phosphosulfate (APS) and diphosphate, the first enzymatic step in sulfur assimilation pathway. APS synthesis involves the formation of a high-energy phosphoric-sulfuric acid anhydride bond driven by GTP hydrolysis by CysN coupled to ATP hydrolysis by CysD. The polypeptide is Sulfate adenylyltransferase subunit 2 (Serratia proteamaculans (strain 568)).